Consider the following 114-residue polypeptide: Nucleoid-associated protein Amet_4780 (114 aa).

The tract at residues 23 to 42 (QKMQKDMEKTQAALEEKEVE) is disordered. Positions 25–42 (MQKDMEKTQAALEEKEVE) are enriched in basic and acidic residues.

Belongs to the YbaB/EbfC family. As to quaternary structure, homodimer.

The protein localises to the cytoplasm. It localises to the nucleoid. Its function is as follows. Binds to DNA and alters its conformation. May be involved in regulation of gene expression, nucleoid organization and DNA protection. The protein is Nucleoid-associated protein Amet_4780 of Alkaliphilus metalliredigens (strain QYMF).